Reading from the N-terminus, the 304-residue chain is Insulin-like growth factor 1 receptor (304 aa).

2 Fibronectin type-III domains span residues 1 to 43 (ERTV…TMPA) and 49 to 142 (IPGP…VQAK). Topologically, residues 1 to 147 (ERTVISNLRP…YVQAKTTYEN (147 aa)) are extracellular. N-linked (GlcNAc...) asparagine glycans are attached at residues Asn-115 and Asn-128. A helical membrane pass occupies residues 148–168 (FIHLIIALPVAVLLIVGGLVI). Over 169–304 (MLYVFHRKRN…HMNGGRKNER (136 aa)) the chain is Cytoplasmic. The residue at position 225 (Ser-225) is a Phosphoserine; by GSK3-beta. Ser-229 is modified (phosphoserine). Residues 231-304 (ENKPPEPEEL…HMNGGRKNER (74 aa)) are disordered. The span at 237–246 (PEELDLEPEN) shows a compositional bias: acidic residues. A compositionally biased stretch (low complexity) spans 247 to 263 (MESVPLDPSASSSSLPL). The segment covering 264–273 (PDRHSGHKAE) has biased composition (basic and acidic residues).

It belongs to the protein kinase superfamily. Tyr protein kinase family. Insulin receptor subfamily. Tetramer of 2 alpha and 2 beta chains linked by disulfide bonds. The alpha chains contribute to the formation of the ligand-binding domain, while the beta chain carries the kinase domain. Forms a hybrid receptor with INSR, the hybrid is a tetramer consisting of 1 alpha chain and 1 beta chain of INSR and 1 alpha chain and 1 beta chain of IGF1R. Interacts with ARRB1 and ARRB2. Interacts with GRB10. Interacts with RACK1. Interacts with SOCS1, SOCS2 and SOCS3. Interacts with 14-3-3 proteins. Interacts with NMD2. Interacts with MAP3K5. Interacts with STAT3. Found in a ternary complex with IGF1 and ITGAV:ITGB3 or ITGA6:ITGB4. Interacts (nascent precursor form) with ZFAND2B. Post-translationally, autophosphorylated on tyrosine residues in response to ligand binding. Autophosphorylation occurs in trans, i.e. one subunit of the dimeric receptor phosphorylates tyrosine residues on the other subunit. Autophosphorylation occurs in a sequential manner. While every single phosphorylation increases kinase activity, all three tyrosine residues in the kinase activation loop have to be phosphorylated for optimal activity. Can be autophosphorylated at additional tyrosine residues (in vitro). May also be phosphorylated at tyrosine residues by mTORC2. Autophosphorylated is followed by phosphorylation of juxtamembrane tyrosines and C-terminal serines. Phosphorylation of Ser-225 by GSK-3beta restrains kinase activity and promotes cell surface expression, it requires a priming phosphorylation at Ser-229. Dephosphorylated by PTPN1. In terms of processing, polyubiquitinated in the activation loop through both 'Lys-48' and 'Lys-29' linkages, promoting receptor endocytosis and subsequent degradation by the proteasome. Ubiquitination is facilitated by pre-existing phosphorylation. Sumoylated with SUMO1. Post-translationally, controlled by regulated intramembrane proteolysis (RIP). Undergoes metalloprotease-dependent constitutive ectodomain shedding to produce a membrane-anchored 52 kDa C-Terminal fragment which is further processed by presenilin gamma-secretase to yield an intracellular 50 kDa fragment.

The protein localises to the cell membrane. It catalyses the reaction L-tyrosyl-[protein] + ATP = O-phospho-L-tyrosyl-[protein] + ADP + H(+). Activated by autophosphorylation at tyrosines in the kinase activation loop; phosphorylation at all three tyrosine residues is required for optimal kinase activity. Inhibited by MSC1609119A-1, BMS-754807, PQIP, benzimidazole pyridinone, isoquinolinedione, bis-azaindole, 3-cyanoquinoline, 2,4-bis-arylamino-1,3-pyrimidine, pyrrolopyrimidine, pyrrole-5-carboxaldehyde, picropodophyllin (PPP), tyrphostin derivatives. While most inhibitors bind to the ATP binding pocket, MSC1609119A-1 functions as allosteric inhibitor and binds close to the DFG motif and the activation loop. Receptor tyrosine kinase which mediates actions of insulin-like growth factor 1 (IGF1). Binds IGF1 with high affinity and IGF2 and insulin (INS) with a lower affinity. The activated IGF1R is involved in cell growth and survival control. IGF1R is crucial for tumor transformation and survival of malignant cell. Ligand binding activates the receptor kinase, leading to receptor autophosphorylation, and tyrosines phosphorylation of multiple substrates, that function as signaling adapter proteins including, the insulin-receptor substrates (IRS1/2), Shc and 14-3-3 proteins. Phosphorylation of IRSs proteins lead to the activation of two main signaling pathways: the PI3K-AKT/PKB pathway and the Ras-MAPK pathway. The result of activating the MAPK pathway is increased cellular proliferation, whereas activating the PI3K pathway inhibits apoptosis and stimulates protein synthesis. Phosphorylated IRS1 can activate the 85 kDa regulatory subunit of PI3K (PIK3R1), leading to activation of several downstream substrates, including protein AKT/PKB. AKT phosphorylation, in turn, enhances protein synthesis through mTOR activation and triggers the antiapoptotic effects of IGFIR through phosphorylation and inactivation of BAD. In parallel to PI3K-driven signaling, recruitment of Grb2/SOS by phosphorylated IRS1 or Shc leads to recruitment of Ras and activation of the ras-MAPK pathway. In addition to these two main signaling pathways IGF1R signals also through the Janus kinase/signal transducer and activator of transcription pathway (JAK/STAT). Phosphorylation of JAK proteins can lead to phosphorylation/activation of signal transducers and activators of transcription (STAT) proteins. In particular activation of STAT3, may be essential for the transforming activity of IGF1R. The JAK/STAT pathway activates gene transcription and may be responsible for the transforming activity. JNK kinases can also be activated by the IGF1R. IGF1 exerts inhibiting activities on JNK activation via phosphorylation and inhibition of MAP3K5/ASK1, which is able to directly associate with the IGF1R. When present in a hybrid receptor with INSR, binds IGF1. This chain is Insulin-like growth factor 1 receptor (IGF1R), found in Sus scrofa (Pig).